The chain runs to 679 residues: Sodium-dependent phosphate transporter 1 (679 aa).

Helical transmembrane passes span 21–41, 62–82, 100–120, 158–178, 203–223, and 230–250; these read YLWMLILGFIIAFVLAFSVGA, ACILASIFETVGSVLLGAKVS, GLLMAGSVSAMFGSAVWQLVA, IVMSWFVSPLLSGIMSGILFF, ACTVGINLFSIMYTGAPLLGF, and GTILISVGCAVFCALIVWFFV. Ser-265 and Ser-269 each carry phosphoserine. 4 helical membrane-spanning segments follow: residues 511–531, 558–578, 600–620, and 650–670; these read VSLLFQFLQILTACFGSFAHG, VATPIWLLLYGGVGICVGLWV, FSIELASALTVVIASNIGLPI, and IFMAWFVTVPISGVISAAIMA. Residues 550 to 558 form an a region; sequence DTGDVSSKV.

The protein belongs to the inorganic phosphate transporter (PiT) (TC 2.A.20) family. In terms of tissue distribution, ubiquitously expressed.

Its subcellular location is the cell membrane. The enzyme catalyses 2 Na(+)(out) + phosphate(out) = 2 Na(+)(in) + phosphate(in). Its function is as follows. Sodium-phosphate symporter which preferentially transports the monovalent form of phosphate with a stoichiometry of two sodium ions per phosphate ion. May play a role in extracellular matrix and cartilage calcification as well as in vascular calcification. Essential for cell proliferation but this function is independent of its phosphate transporter activity. (Microbial infection) May function as a retroviral receptor as it confers human cells susceptibility to infection to Gibbon Ape Leukemia Virus (GaLV), Simian sarcoma-associated virus (SSAV) and Feline leukemia virus subgroup B (FeLV-B) as well as 10A1 murine leukemia virus (10A1 MLV). This chain is Sodium-dependent phosphate transporter 1 (SLC20A1), found in Homo sapiens (Human).